We begin with the raw amino-acid sequence, 410 residues long: Putative competence-damage inducible protein (410 aa).

It belongs to the CinA family.

The polypeptide is Putative competence-damage inducible protein (Finegoldia magna (strain ATCC 29328 / DSM 20472 / WAL 2508) (Peptostreptococcus magnus)).